Here is a 160-residue protein sequence, read N- to C-terminus: Large ribosomal subunit protein eL21 (160 aa).

2 stretches are compositionally biased toward basic and acidic residues: residues 112–123 and 136–145; these read NDQKKKEAKEKG and REAHFVRTNG. Positions 112–145 are disordered; it reads NDQKKKEAKEKGTWVQLKRQPAPPREAHFVRTNG.

Belongs to the eukaryotic ribosomal protein eL21 family. As to quaternary structure, component of the large ribosomal subunit.

The protein resides in the cytoplasm. It is found in the cytosol. The protein localises to the endoplasmic reticulum. Its function is as follows. Component of the large ribosomal subunit. The ribosome is a large ribonucleoprotein complex responsible for the synthesis of proteins in the cell. This is Large ribosomal subunit protein eL21 (RPL21) from Oryctolagus cuniculus (Rabbit).